The primary structure comprises 98 residues: NADH-ubiquinone oxidoreductase chain 4L (98 aa).

Transmembrane regions (helical) follow at residues proline 2–phenylalanine 22, serine 29–leucine 49, and isoleucine 61–valine 81.

It belongs to the complex I subunit 4L family. Core subunit of respiratory chain NADH dehydrogenase (Complex I) which is composed of 45 different subunits.

Its subcellular location is the mitochondrion inner membrane. It carries out the reaction a ubiquinone + NADH + 5 H(+)(in) = a ubiquinol + NAD(+) + 4 H(+)(out). Core subunit of the mitochondrial membrane respiratory chain NADH dehydrogenase (Complex I) which catalyzes electron transfer from NADH through the respiratory chain, using ubiquinone as an electron acceptor. Part of the enzyme membrane arm which is embedded in the lipid bilayer and involved in proton translocation. The chain is NADH-ubiquinone oxidoreductase chain 4L (MT-ND4L) from Hapalemur aureus (Golden bamboo lemur).